The primary structure comprises 349 residues: Glycerol-3-phosphate dehydrogenase [NAD(+)], cytoplasmic (349 aa).

NAD(+) is bound at residue Gly10 to Gly15. Residue Lys120 coordinates substrate. Residue Ala153 participates in NAD(+) binding. At Ser154 the chain carries Phosphoserine. The Proton acceptor role is filled by Lys204. Arg269 serves as a coordination point for NAD(+). Arg269 to Asn270 contributes to the substrate binding site. Lys289 carries the N6-succinyllysine modification. NAD(+)-binding residues include Lys296 and Gln298. Tyr326 is subject to Phosphotyrosine.

It belongs to the NAD-dependent glycerol-3-phosphate dehydrogenase family. As to quaternary structure, homodimer.

The protein localises to the cytoplasm. The catalysed reaction is sn-glycerol 3-phosphate + NAD(+) = dihydroxyacetone phosphate + NADH + H(+). Has glycerol-3-phosphate dehydrogenase activity. The polypeptide is Glycerol-3-phosphate dehydrogenase [NAD(+)], cytoplasmic (Mus musculus (Mouse)).